Consider the following 1091-residue polypeptide: MSAPRYAELQVTTHFSFLRGASSCDELFEQAKNLGIEALGVVDRNSLAAIPRAYEAANNHGVRLVIGCRLDLDDDLSVLVYPMDRAAYGRLCRLLSVGKKRGGKGKCRLSWDDLVAYGEGLIVVLLADLADDLCALRLRRLKAAFADRAYMALSLRRRPNDQMRLFELSGMAQAAGVPTVVTNDVLFHVPERRMLQDVVTCIRHNCTIDEAGFRRERHADRYMKPPEEMHRLFARYPEALSRSLEIAKRCKFSLKELVYQYPEERSLPGLTAQQALEKMVWEAVPGRYPNGLPEKVEKALHHELDVVGRLQYASYFLTVNAIVRYARSKDILCQGRGSAANSVICFVLGITAIDPALFSNLVFERFVSENRGEPPDIDVDFEHQRREEVIQWVYDTYGRDKAALCSVVTRYRGRGALRDVGKVLGLPEDLTKLLSSQVWRWSEGVGEKQVKELNLNMEDRRLKLAFELANQLVGTPRHHSQHPGGFVLSHDRLDELVPIEPAAMNDRQIIEWDKDDIDIVKFMKMDCLALGMLSCMKRGFDLLEARTGEKYDLAAMPPDDPATFAMIQKADTLGTFQIESRAQMSMLPRLKPAKFYDLVIQVAIVRPGPIQGDMVHPYLRRRQGKEPVLYEKPQLENILKKTLGVPLFQEQAMRIAMDCADFTADEADQLRRAMATFKNVGTISKFKEKLVTGMVANGYDKEFAERIFKQLEGFGSYGFPESHAASFALIAYASSWLKCHHPDIFCTAILNSQPMGFYAPAQIVRDARDHGVEVRPVCVNNSRFDCTLEPTGKKNDKGEERFAVRLGLRMVKGLSNDHAADIVAARQDRPFASVDDLWRRAGVPAAALVCLAEADAFLPSLRLARREALWAIKALRDEPLPLFAAAAIRENAVIEELQEPSVALRPMTDGGEVVQDYGHVGLTLREHPMTFLRRDLSRRRIVTCAEAVRVRDGTWLETAGLVLVRQRPGSAKGVIFMTLEDETGIANAVLWVKTFEKYRRVVLSAGMVGIYGKIQREGEVVHLVAHRLTDLSHALASVGERNNAFPLPHGRGDEFHHGMPDDHRAIRKRPPPSNHDDDEVERIKVISRNFH.

A compositionally biased stretch (basic and acidic residues) spans 1051 to 1064 (RGDEFHHGMPDDHR). Residues 1051–1080 (RGDEFHHGMPDDHRAIRKRPPPSNHDDDEV) are disordered.

Belongs to the DNA polymerase type-C family. DnaE2 subfamily.

Its subcellular location is the cytoplasm. It catalyses the reaction DNA(n) + a 2'-deoxyribonucleoside 5'-triphosphate = DNA(n+1) + diphosphate. Functionally, DNA polymerase involved in damage-induced mutagenesis and translesion synthesis (TLS). It is not the major replicative DNA polymerase. The polypeptide is Error-prone DNA polymerase 1 (Agrobacterium fabrum (strain C58 / ATCC 33970) (Agrobacterium tumefaciens (strain C58))).